Here is a 305-residue protein sequence, read N- to C-terminus: 5'-hydroxyaverantin dehydrogenase stcG (305 aa).

NADP(+) is bound by residues serine 25, leucine 27, glutamine 48, aspartate 68, tyrosine 186, lysine 190, and serine 221. Catalysis depends on tyrosine 186, which acts as the Proton acceptor. Lysine 190 serves as the catalytic Lowers pKa of active site Tyr.

It belongs to the short-chain dehydrogenases/reductases (SDR) family.

It catalyses the reaction (1'S,5'S)-5'-hydroxyaverantin + NAD(+) = (S)-5'-oxoaverantin + NADH + H(+). It carries out the reaction (1'S,5'R)-5'-hydroxyaverantin + NAD(+) = (S)-5'-oxoaverantin + NADH + 2 H(+). It functions in the pathway mycotoxin biosynthesis; sterigmatocystin biosynthesis. Its function is as follows. 5'-hydroxyaverantin dehydrogenase; part of the gene cluster that mediates the biosynthesis of sterigmatocystin (ST), a polyketide-derived furanocoumarin which is part of the most toxic and carcinogenic compounds among the known mycotoxins. The first step in the biosynthesis of sterigmatocystin is the production of hexanoate by the fatty acid synthase (FAS) units stcJ and stcK. The polyketide backbone is assembled by the non-reducing polyketide synthase stcA by condensation of the starter hexanoyl-CoA and 7 malonyl-CoA extender units followed by cyclization and release of norsolorinic acid. Norsolorinic acid is the first stable intermediate in the biosynthesis of sterigmatocystin and is converted into averantin (AVN) by the ketoreductase stcE which reduces the hexanoate ketone to an alcohol. Averantin is then oxidized into 5'-hydroxyaverantin (HAVN) by the cytochrome P450 monooxygenase stcF. 5'-hydroxyaverantin is further converted to 5'-oxyaverantin (OAVN) by the 5'-hydroxyaverantin dehydrogenase stcG. The next step is the conversion of OAVN into averufin (AVF) which is catalyzed by a yet to be identified enzyme. The cytochrome P450 monooxygenase stcB and the flavin-binding monooxygenase stcW are both required for the conversion of averufin to 1-hydroxyversicolorone. The esterase stcI probably catalyzes the formation of versiconal hemiacetal acetate from 1-hydroxyversicolorone. The oxydoreductase stcN then probably catalyzes the biosynthetic step from versiconal to versicolorin B (VERB). The next step is performed by the versicolorin B desaturase stcL to produce versicolorin A (VERA). The ketoreductase stcU and the cytochrome P450 monooxygenase stcS are involved in the conversion of versicolorin A to demethylsterigmatocystin. The Baeyer-Villiger oxidas stcQ and the reductase stcR might be involved in the biosynthetic step from versicolorin A to demethylsterigmatocystin. The final step in the biosynthesis of sterigmatocystin is the methylation of demethylsterigmatocystin catalyzed by the methyltransferase stcP. The protein is 5'-hydroxyaverantin dehydrogenase stcG of Emericella nidulans (strain FGSC A4 / ATCC 38163 / CBS 112.46 / NRRL 194 / M139) (Aspergillus nidulans).